The primary structure comprises 24 residues: Lectin (24 aa).

Residues 1-18 are compositionally biased toward polar residues; the sequence is AEEQSFSSTKFSTDQPNL. Residues 1-24 are disordered; sequence AEEQSFSSTKFSTDQPNLILQGDA.

This sequence belongs to the leguminous lectin family. In terms of assembly, homotetramer.

The chain is Lectin from Crotalaria juncea (Sunn hemp).